The following is a 757-amino-acid chain: Lysyl oxidase homolog 4 (757 aa).

Positions 1–25 (MMWPQPPTFSLFLLLLLSQAPSSRP) are cleaved as a signal peptide. SRCR domains follow at residues 33–134 (LRLV…VVCH), 160–288 (VRLK…VSCV), 312–412 (VRLR…VRCN), and 422–530 (VRLA…VACM). Cystine bridges form between C59/C123, C72/C133, C103/C113, C192/C277, C205/C287, C252/C262, C337/C401, C350/C411, C381/C391, C451/C516, C464/C529, C498/C508, C559/C565, C611/C659, C643/C649, C671/C681, and C718/C732. The N-linked (GlcNAc...) asparagine glycan is linked to N199. Residues 534 to 737 (PDLVMNAQLV…WLHNCHTGDS (204 aa)) are lysyl-oxidase like. H612, H614, and H616 together coordinate Cu cation. An N-linked (GlcNAc...) asparagine glycan is attached at N630. Positions 639–675 (KASFCLEDTNCPSGVQRRYACANFGEQGVAVGCWDTY) form a cross-link, lysine tyrosylquinone (Lys-Tyr). At Y675 the chain carries 2',4',5'-topaquinone.

This sequence belongs to the lysyl oxidase family. The cofactor is Cu cation. Lysine tyrosylquinone residue serves as cofactor. The lysine tyrosylquinone cross-link (LTQ) is generated by condensation of the epsilon-amino group of a lysine with a topaquinone produced by oxidation of tyrosine. In terms of processing, may be proteolytically cleaved by BMP1.

It is found in the secreted. It localises to the extracellular space. The enzyme catalyses L-lysyl-[protein] + O2 + H2O = (S)-2-amino-6-oxohexanoyl-[protein] + H2O2 + NH4(+). Its function is as follows. Catalyzes the oxidative deamination of lysine and hydroxylysine residues in collagen and elastin, resulting in the formation of covalent cross-linkages, and the stabilization of collagen and elastin fibers. In Mus musculus (Mouse), this protein is Lysyl oxidase homolog 4 (Loxl4).